Reading from the N-terminus, the 137-residue chain is Small ribosomal subunit protein uS12 (137 aa).

The residue at position 102 (Asp102) is a 3-methylthioaspartic acid.

It belongs to the universal ribosomal protein uS12 family. In terms of assembly, part of the 30S ribosomal subunit. Contacts proteins S8 and S17. May interact with IF1 in the 30S initiation complex.

In terms of biological role, with S4 and S5 plays an important role in translational accuracy. Interacts with and stabilizes bases of the 16S rRNA that are involved in tRNA selection in the A site and with the mRNA backbone. Located at the interface of the 30S and 50S subunits, it traverses the body of the 30S subunit contacting proteins on the other side and probably holding the rRNA structure together. The combined cluster of proteins S8, S12 and S17 appears to hold together the shoulder and platform of the 30S subunit. This Phytoplasma mali (strain AT) protein is Small ribosomal subunit protein uS12.